A 177-amino-acid chain; its full sequence is Large ribosomal subunit protein uL6 (177 aa).

The protein belongs to the universal ribosomal protein uL6 family. As to quaternary structure, part of the 50S ribosomal subunit.

Functionally, this protein binds to the 23S rRNA, and is important in its secondary structure. It is located near the subunit interface in the base of the L7/L12 stalk, and near the tRNA binding site of the peptidyltransferase center. The chain is Large ribosomal subunit protein uL6 from Serratia proteamaculans (strain 568).